A 526-amino-acid chain; its full sequence is Peptide chain release factor 3 (526 aa).

The 269-residue stretch at 9-277 (DRRRTFAIVS…TFVDHAPAPL (269 aa)) folds into the tr-type G domain. GTP-binding positions include 18–25 (SHPDAGKT), 86–90 (DTPGH), and 140–143 (NKLD).

Belongs to the TRAFAC class translation factor GTPase superfamily. Classic translation factor GTPase family. PrfC subfamily.

It localises to the cytoplasm. In terms of biological role, increases the formation of ribosomal termination complexes and stimulates activities of RF-1 and RF-2. It binds guanine nucleotides and has strong preference for UGA stop codons. It may interact directly with the ribosome. The stimulation of RF-1 and RF-2 is significantly reduced by GTP and GDP, but not by GMP. This chain is Peptide chain release factor 3, found in Geobacter sulfurreducens (strain ATCC 51573 / DSM 12127 / PCA).